Reading from the N-terminus, the 338-residue chain is Glyceraldehyde-3-phosphate dehydrogenase (338 aa).

Residues 12-13 (RI), Asp34, and Arg79 each bind NAD(+). D-glyceraldehyde 3-phosphate contacts are provided by residues 150–152 (SCT), Thr181, 210–211 (TG), and Arg233. Cys151 acts as the Nucleophile in catalysis. An NAD(+)-binding site is contributed by Asn315.

It belongs to the glyceraldehyde-3-phosphate dehydrogenase family. Homotetramer.

It localises to the cytoplasm. The enzyme catalyses D-glyceraldehyde 3-phosphate + phosphate + NAD(+) = (2R)-3-phospho-glyceroyl phosphate + NADH + H(+). Its pathway is carbohydrate degradation; glycolysis; pyruvate from D-glyceraldehyde 3-phosphate: step 1/5. The chain is Glyceraldehyde-3-phosphate dehydrogenase (gpd-1) from Neurospora crassa (strain ATCC 24698 / 74-OR23-1A / CBS 708.71 / DSM 1257 / FGSC 987).